Here is a 362-residue protein sequence, read N- to C-terminus: Sterol-4-alpha-carboxylate 3-dehydrogenase, decarboxylating (362 aa).

The residue at position 1 (methionine 1) is an N-acetylmethionine. The active-site Proton acceptor is the tyrosine 161. Lysine 165 serves as a coordination point for NAD(+). A helical transmembrane segment spans residues 287 to 307 (WMAYYLAFLLSLLVMVVSPLI). The Prevents secretion from ER motif lies at 359–362 (RKDK).

This sequence belongs to the 3-beta-HSD family. As to quaternary structure, homodimer.

It localises to the endoplasmic reticulum membrane. Its subcellular location is the lipid droplet. The enzyme catalyses a 3beta-hydroxysteroid-4alpha-carboxylate + NADP(+) = a 3-oxosteroid + CO2 + NADPH. It catalyses the reaction a 3beta-hydroxysteroid-4alpha-carboxylate + NAD(+) = a 3-oxosteroid + CO2 + NADH. It carries out the reaction 4alpha-carboxyzymosterol + NADP(+) = zymosterone + CO2 + NADPH. The catalysed reaction is 4alpha-carboxy-4beta-methyl-5alpha-cholest-8-en-3beta-ol + NADP(+) = 4alpha-methyl-5alpha-cholest-8-en-3-one + CO2 + NADPH. The enzyme catalyses 4alpha-carboxy-5alpha-cholest-8-ene-3beta-ol + NADP(+) = 5alpha-cholest-8-en-3-one + CO2 + NADPH. It catalyses the reaction 4beta-methylzymosterol-4alpha-carboxylate + NADP(+) = 3-dehydro-4-methylzymosterol + CO2 + NADPH. It carries out the reaction 4beta-methylzymosterol-4alpha-carboxylate + NAD(+) = 3-dehydro-4-methylzymosterol + CO2 + NADH. The catalysed reaction is 4alpha-carboxy-5alpha-cholest-8-ene-3beta-ol + NAD(+) = 5alpha-cholest-8-en-3-one + CO2 + NADH. The enzyme catalyses 4alpha-carboxy-4beta-methyl-5alpha-cholest-8-en-3beta-ol + NAD(+) = 4alpha-methyl-5alpha-cholest-8-en-3-one + CO2 + NADH. It catalyses the reaction 4alpha-carboxyzymosterol + NAD(+) = zymosterone + CO2 + NADH. It functions in the pathway steroid biosynthesis; zymosterol biosynthesis; zymosterol from lanosterol: step 4/6. In terms of biological role, catalyzes the NAD(P)(+)-dependent oxidative decarboxylation of the C4 methyl groups of 4-alpha-carboxysterols in post-squalene cholesterol biosynthesis. Plays a role in the regulation of the endocytic trafficking of EGFR. The polypeptide is Sterol-4-alpha-carboxylate 3-dehydrogenase, decarboxylating (Nsdhl) (Mus musculus (Mouse)).